A 176-amino-acid chain; its full sequence is Large ribosomal subunit protein uL16 (176 aa).

It belongs to the universal ribosomal protein uL16 family.

This Thermoplasma volcanium (strain ATCC 51530 / DSM 4299 / JCM 9571 / NBRC 15438 / GSS1) protein is Large ribosomal subunit protein uL16.